Here is a 172-residue protein sequence, read N- to C-terminus: Protein-export protein SecB (172 aa).

This sequence belongs to the SecB family. In terms of assembly, homotetramer, a dimer of dimers. One homotetramer interacts with 1 SecA dimer.

The protein localises to the cytoplasm. One of the proteins required for the normal export of preproteins out of the cell cytoplasm. It is a molecular chaperone that binds to a subset of precursor proteins, maintaining them in a translocation-competent state. It also specifically binds to its receptor SecA. The sequence is that of Protein-export protein SecB from Ralstonia pickettii (strain 12J).